The sequence spans 153 residues: UPF0756 membrane protein BCQ_4399 (153 aa).

The next 4 membrane-spanning stretches (helical) occupy residues 8-28, 54-74, 87-107, and 117-137; these read FLFILLIIGLIAKNQSLTVAI, LGVTVITIAVLVPIATGEIGF, WIALASGVAVALLAKGGVQLL, and LVFGTIIAVALFNGVAVGPLI.

It belongs to the UPF0756 family.

It is found in the cell membrane. The chain is UPF0756 membrane protein BCQ_4399 from Bacillus cereus (strain Q1).